A 438-amino-acid chain; its full sequence is Phosphoribosylamine--glycine ligase (438 aa).

Residues 107-319 enclose the ATP-grasp domain; the sequence is RKLFEDYDIP…LAKISKQIVD (213 aa). 134–197 provides a ligand contact to ATP; sequence IDNFDEPVVV…EELLLGEEYT (64 aa). The Mg(2+) site is built by Gln277, Glu289, and Asn291. Residues Gln277, Glu289, and Asn291 each coordinate Mn(2+).

This sequence belongs to the GARS family. The cofactor is Mg(2+). Requires Mn(2+) as cofactor.

The catalysed reaction is 5-phospho-beta-D-ribosylamine + glycine + ATP = N(1)-(5-phospho-beta-D-ribosyl)glycinamide + ADP + phosphate + H(+). Its pathway is purine metabolism; IMP biosynthesis via de novo pathway; N(1)-(5-phospho-D-ribosyl)glycinamide from 5-phospho-alpha-D-ribose 1-diphosphate: step 2/2. The chain is Phosphoribosylamine--glycine ligase from Methanosphaera stadtmanae (strain ATCC 43021 / DSM 3091 / JCM 11832 / MCB-3).